The primary structure comprises 1888 residues: E3 ubiquitin-protein ligase UPL3 (1888 aa).

The segment covering 1 to 10 (METRSRKRAE) has biased composition (basic and acidic residues). A disordered region spans residues 1–157 (METRSRKRAE…NGGFMHPNMS (157 aa)). Low complexity predominate over residues 41–81 (LSSSSSSSLAPTPPSSSTTTRSRSSRSAAAAAPMDTSTDSS). Over residues 97-124 (NSDKGKEKEHDVRIRERERERDRAREQL) the composition is skewed to basic and acidic residues. Residues 137–146 (DEDDDNDSED) show a composition bias toward acidic residues. ARM repeat units lie at residues 227-267 (EDSL…HLCD), 270-310 (PSSC…KISQ), 312-349 (HPTA…NMCK), and 351-390 (LPSD…RIAE). Disordered regions lie at residues 660 to 711 (KPSH…IGAN), 970 to 1119 (ALKP…LPMC), 1134 to 1157 (DDDG…GAAA), and 1280 to 1307 (RLSV…VESQ). Over residues 986-1002 (PSGAGVSSPSSSTPAST) the composition is skewed to low complexity. Residues 1019-1029 (TSKKDPVHEKG) are compositionally biased toward basic and acidic residues. Positions 1076–1113 (SSEDEELEISPVDIDDALVIEEDDISDDEDDDNEDVLD) are enriched in acidic residues. Composition is skewed to low complexity over residues 1148–1157 (ASGGTSGAAA) and 1286–1303 (ASST…TNSS). Positions 1377-1451 (AKVPLDEFVN…ALNRLQQQQG (75 aa)) are K-box. One can recognise an HECT domain in the interval 1490-1888 (MYSSQKAVLE…NEGQGSFDLS (399 aa)). Cys-1855 acts as the Glycyl thioester intermediate in catalysis.

The protein belongs to the UPL family. K-HECT subfamily. As to expression, widely expressed.

The catalysed reaction is S-ubiquitinyl-[E2 ubiquitin-conjugating enzyme]-L-cysteine + [acceptor protein]-L-lysine = [E2 ubiquitin-conjugating enzyme]-L-cysteine + N(6)-ubiquitinyl-[acceptor protein]-L-lysine.. It functions in the pathway protein modification; protein ubiquitination. In terms of biological role, probable E3 ubiquitin-protein ligase which mediates ubiquitination and subsequent proteasomal degradation of target proteins. Involved in the repression of endoreduplication process and the cell morphogenesis in the trichomes. This is E3 ubiquitin-protein ligase UPL3 (UPL3) from Arabidopsis thaliana (Mouse-ear cress).